We begin with the raw amino-acid sequence, 497 residues long: Chlorophyllide reductase 52.5 kDa chain (497 aa).

A run of 3 helical transmembrane segments spans residues 65-82 (VATV…LSFI), 126-142 (AIVV…GVPL), and 216-233 (MVIG…GPTV).

It belongs to the BchN/ChlN family. Chlorophyllide reductase is composed of three subunits; BchX, BchY and BchZ. Forms a heterodimer of one BchY and one BchZ subunit.

The protein resides in the cell membrane. The enzyme catalyses 3-deacetyl-3-vinylbacteriochlorophyllide a + 2 oxidized [2Fe-2S]-[ferredoxin] + ADP + phosphate = chlorophyllide a + 2 reduced [2Fe-2S]-[ferredoxin] + ATP + H2O + H(+). It carries out the reaction bacteriochlorophyllide a + 2 oxidized [2Fe-2S]-[ferredoxin] + ADP + phosphate = 3-acetyl-3-devinylchlorophyllide a + 2 reduced [2Fe-2S]-[ferredoxin] + ATP + H2O + H(+). The catalysed reaction is 3-deacetyl-3-(1-hydroxyethyl)bacteriochlorophyllide a + 2 oxidized [2Fe-2S]-[ferredoxin] + ADP + phosphate = 3-devinyl-3-(1-hydroxyethyl)chlorophyllide a + 2 reduced [2Fe-2S]-[ferredoxin] + ATP + H2O + H(+). Its pathway is porphyrin-containing compound metabolism; bacteriochlorophyll biosynthesis (light-independent). Its function is as follows. Converts chlorophylls (Chl) into bacteriochlorophylls (BChl) by reducing ring B of the tetrapyrrole. The sequence is that of Chlorophyllide reductase 52.5 kDa chain (bchY) from Rhodobacter capsulatus (strain ATCC BAA-309 / NBRC 16581 / SB1003).